The following is a 248-amino-acid chain: Probable transcriptional regulatory protein FTM_1203 (248 aa).

The protein belongs to the TACO1 family.

Its subcellular location is the cytoplasm. This chain is Probable transcriptional regulatory protein FTM_1203, found in Francisella tularensis subsp. mediasiatica (strain FSC147).